The primary structure comprises 142 residues: Large ribosomal subunit protein uL11 (142 aa).

Belongs to the universal ribosomal protein uL11 family. Part of the ribosomal stalk of the 50S ribosomal subunit. Interacts with L10 and the large rRNA to form the base of the stalk. L10 forms an elongated spine to which L12 dimers bind in a sequential fashion forming a multimeric L10(L12)X complex. One or more lysine residues are methylated.

Forms part of the ribosomal stalk which helps the ribosome interact with GTP-bound translation factors. This chain is Large ribosomal subunit protein uL11, found in Mesorhizobium japonicum (strain LMG 29417 / CECT 9101 / MAFF 303099) (Mesorhizobium loti (strain MAFF 303099)).